We begin with the raw amino-acid sequence, 226 residues long: Phosphoribosylformylglycinamidine synthase subunit PurQ (226 aa).

A Glutamine amidotransferase type-1 domain is found at Lys-2–Gly-226. Catalysis depends on Cys-86, which acts as the Nucleophile. Residues His-195 and Glu-197 contribute to the active site.

As to quaternary structure, part of the FGAM synthase complex composed of 1 PurL, 1 PurQ and 2 PurS subunits.

It is found in the cytoplasm. It catalyses the reaction N(2)-formyl-N(1)-(5-phospho-beta-D-ribosyl)glycinamide + L-glutamine + ATP + H2O = 2-formamido-N(1)-(5-O-phospho-beta-D-ribosyl)acetamidine + L-glutamate + ADP + phosphate + H(+). The catalysed reaction is L-glutamine + H2O = L-glutamate + NH4(+). It functions in the pathway purine metabolism; IMP biosynthesis via de novo pathway; 5-amino-1-(5-phospho-D-ribosyl)imidazole from N(2)-formyl-N(1)-(5-phospho-D-ribosyl)glycinamide: step 1/2. In terms of biological role, part of the phosphoribosylformylglycinamidine synthase complex involved in the purines biosynthetic pathway. Catalyzes the ATP-dependent conversion of formylglycinamide ribonucleotide (FGAR) and glutamine to yield formylglycinamidine ribonucleotide (FGAM) and glutamate. The FGAM synthase complex is composed of three subunits. PurQ produces an ammonia molecule by converting glutamine to glutamate. PurL transfers the ammonia molecule to FGAR to form FGAM in an ATP-dependent manner. PurS interacts with PurQ and PurL and is thought to assist in the transfer of the ammonia molecule from PurQ to PurL. In Limosilactobacillus fermentum (strain NBRC 3956 / LMG 18251) (Lactobacillus fermentum), this protein is Phosphoribosylformylglycinamidine synthase subunit PurQ.